Consider the following 901-residue polypeptide: HTH-type transcriptional regulator MalT (901 aa).

Residue Ser39–Thr46 participates in ATP binding. The HTH luxR-type domain maps to Glu829–Leu894. The segment at residues Asn853–Arg872 is a DNA-binding region (H-T-H motif).

This sequence belongs to the MalT family. Monomer in solution. Oligomerizes to an active state in the presence of the positive effectors ATP and maltotriose.

Activated by ATP and maltotriose, which are both required for DNA binding. Its function is as follows. Positively regulates the transcription of the maltose regulon whose gene products are responsible for uptake and catabolism of malto-oligosaccharides. Specifically binds to the promoter region of its target genes, recognizing a short DNA motif called the MalT box. The protein is HTH-type transcriptional regulator MalT of Salmonella gallinarum (strain 287/91 / NCTC 13346).